Reading from the N-terminus, the 507-residue chain is MEKYENLGLVGEGSYGMVMKCRNKDSGRIVAIKKFLESDDDKMVKKIAMREIKLLKQLRHENLVNLLEVCKKKKRWYLVFEFVDHTILDDLKLFPNGLDYQVVQKYLFQIINGIGFCHSHNIIHRDIKPENILVSQSGVVKLCDFGFARTLAAPGEVYTDYVATRWYRAPELLVGDVKYGKAVDIWAIGCLVIEMLMGQPLFPGESDIDQLHHIMTCLGNLIPRHQELFYKNPVFAGVRLPEIKDIEAEPLESRYPKLPEVVISLAKKCLHIDPDKRPLCADLLHHDFFQMDGFAERFSQELQLKIEKDARNNSLPKKFQIRKKEKDDALGEERKTLVVQDTNADPKTKDSKVLKVKGSKIDVEKTEKGTRASNGSCLHDNGTSHKGLSSTSLRDCSNVTIDHPRNPGTAIPPLTHNLSAVAPGINAAMGTIPGVQNYRVDEKTKKYCNPFVKPSQPSPSGIYNMNVSASVSNCPLPRKSKHSPPLDLAVSMGARRVKLYLETESET.

Positions Y4–F289 constitute a Protein kinase domain. Residues V10–V18 and K33 each bind ATP. Positions K45–E51 match the [NKR]KIAxRE motif. D126 (proton acceptor) is an active-site residue. The tract at residues K365–S392 is disordered.

The protein belongs to the protein kinase superfamily. CMGC Ser/Thr protein kinase family. CDC2/CDKX subfamily.

It is found in the cytoplasm. The protein localises to the nucleus. The catalysed reaction is L-seryl-[protein] + ATP = O-phospho-L-seryl-[protein] + ADP + H(+). It catalyses the reaction L-threonyl-[protein] + ATP = O-phospho-L-threonyl-[protein] + ADP + H(+). The protein is Cyclin-dependent kinase-like 2 of Rattus norvegicus (Rat).